Here is a 562-residue protein sequence, read N- to C-terminus: Catalase T (562 aa).

Residues His-64 and Asn-137 contribute to the active site. Tyr-351 contributes to the heme binding site.

This sequence belongs to the catalase family. In terms of assembly, homotetramer. Heme serves as cofactor.

It localises to the cytoplasm. It carries out the reaction 2 H2O2 = O2 + 2 H2O. Occurs in almost all aerobically respiring organisms and serves to protect cells from the toxic effects of hydrogen peroxide. The chain is Catalase T (CTT1) from Saccharomyces cerevisiae (strain YJM789) (Baker's yeast).